The following is a 349-amino-acid chain: Protein-glutamate methylesterase/protein-glutamine glutaminase (349 aa).

One can recognise a Response regulatory domain in the interval Lys-5–Glu-122. Asp-56 is subject to 4-aspartylphosphate. Residues Ala-156 to Glu-349 enclose the CheB-type methylesterase domain. Residues Ser-168, His-195, and Asp-291 contribute to the active site.

Belongs to the CheB family. In terms of processing, phosphorylated by CheA. Phosphorylation of the N-terminal regulatory domain activates the methylesterase activity.

The protein resides in the cytoplasm. The enzyme catalyses [protein]-L-glutamate 5-O-methyl ester + H2O = L-glutamyl-[protein] + methanol + H(+). It catalyses the reaction L-glutaminyl-[protein] + H2O = L-glutamyl-[protein] + NH4(+). Involved in chemotaxis. Part of a chemotaxis signal transduction system that modulates chemotaxis in response to various stimuli. Catalyzes the demethylation of specific methylglutamate residues introduced into the chemoreceptors (methyl-accepting chemotaxis proteins or MCP) by CheR. Also mediates the irreversible deamidation of specific glutamine residues to glutamic acid. This Geobacillus kaustophilus (strain HTA426) protein is Protein-glutamate methylesterase/protein-glutamine glutaminase.